The primary structure comprises 96 residues: UPF0235 protein YE3436 (96 aa).

The protein belongs to the UPF0235 family.

The protein is UPF0235 protein YE3436 of Yersinia enterocolitica serotype O:8 / biotype 1B (strain NCTC 13174 / 8081).